Consider the following 396-residue polypeptide: GTPase Obg (396 aa).

The Obg domain maps to 1–159; the sequence is MKFVDEASIY…RTLKLEMKVL (159 aa). The tract at residues 120-146 is disordered; the sequence is GGHHGLGNTRFKSSTNRAPRQTTKGTV. The segment covering 129–144 has biased composition (polar residues); that stretch reads RFKSSTNRAPRQTTKG. The region spanning 160–333 is the OBG-type G domain; that stretch reads ADVGLLGLPN…LCLDLMTALD (174 aa). GTP contacts are provided by residues 166-173, 191-195, 213-216, 283-286, and 314-316; these read GLPNAGKS, FTTLV, DIPG, NKTD, and SAI. Mg(2+) contacts are provided by serine 173 and threonine 193.

The protein belongs to the TRAFAC class OBG-HflX-like GTPase superfamily. OBG GTPase family. As to quaternary structure, monomer. The cofactor is Mg(2+).

It localises to the cytoplasm. Functionally, an essential GTPase which binds GTP, GDP and possibly (p)ppGpp with moderate affinity, with high nucleotide exchange rates and a fairly low GTP hydrolysis rate. Plays a role in control of the cell cycle, stress response, ribosome biogenesis and in those bacteria that undergo differentiation, in morphogenesis control. The polypeptide is GTPase Obg (Marinomonas sp. (strain MWYL1)).